The sequence spans 36 residues: Pollen allergen Dac g 2 (36 aa).

Belongs to the expansin family. Expansin B subfamily.

It is found in the secreted. This chain is Pollen allergen Dac g 2, found in Dactylis glomerata (Orchard grass).